Consider the following 870-residue polypeptide: Lysosomal cholesterol signaling protein (870 aa).

Topologically, residues 1 to 38 are lumenal; the sequence is MNSNLPAENLTIAVNMTKTLPTAVTHGFNSTNDPPSMS. The PIN-like transporter stretch occupies residues 1–370; sequence MNSNLPAENL…SAWLLTFPTM (370 aa). N-linked (GlcNAc...) asparagine glycans are attached at residues Asn-9, Asn-15, and Asn-29. The helical transmembrane segment at 39-59 threads the bilayer; sequence ITRLFPALLECFGIVLCGYIA. Cholesterol-binding residues include Phe-43 and Tyr-57. At 60–79 the chain is on the cytoplasmic side; sequence GRANVITSTQAKGLGNFVSR. Residues 80–100 form a helical membrane-spanning segment; that stretch reads FALPALLFKNMVVLNFSNVDW. Residues 101–104 are Lumenal-facing; the sequence is SFLY. A helical membrane pass occupies residues 105-125; sequence SILIAKASVFFIVCVLTLLVA. The Cytoplasmic segment spans residues 126–133; sequence SPDSRFSK. A discontinuously helical membrane pass occupies residues 134-154; sequence AGLFPIFATQSNDFALGYPIV. Residues 155 to 167 are Lumenal-facing; that stretch reads EALYQTTYPEYLQ. The chain crosses the membrane as a helical span at residues 168 to 188; it reads YIYLVAPISLMMLNPIGFIFC. Residues 189–213 are Cytoplasmic-facing; sequence EIQKWKDTQNASQNKIKIVGLGLLR. The chain crosses the membrane as a discontinuously helical span at residues 214-234; it reads VLQNPIVFMVFIGIAFNFILD. Residues 235 to 243 are Lumenal-facing; that stretch reads RKVPVYVEN. A discontinuously helical membrane pass occupies residues 244 to 264; it reads FLDGLGNSFSGSALFYLGLTM. At 265-273 the chain is on the cytoplasmic side; that stretch reads VGKIKRLKK. Positions 266, 267, and 268 each coordinate cholesterol. A helical membrane pass occupies residues 274–294; sequence SAFVVLILLITAKLLVLPLLC. Residues 295-315 are Lumenal-facing; the sequence is REMVELLDKGDSVVNHTSLSN. Asn-309 is a glycosylation site (N-linked (GlcNAc...) asparagine). Residues 316-336 form a discontinuously helical membrane-spanning segment; the sequence is YAFLYGVFPVAPGVAIFATQF. The Cytoplasmic segment spans residues 337 to 346; it reads NMEVEIITSG. The chain crosses the membrane as a helical span at residues 347–367; it reads MVISTFVSAPIMYVSAWLLTF. Residues 368–381 lie on the Lumenal side of the membrane; sequence PTMDPKPLAYAIQN. A GPCR region spans residues 380–717; it reads QNVSFDISIV…FGIFGLDKHL (338 aa). A glycan (N-linked (GlcNAc...) asparagine) is linked at Asn-381. Residues 382-402 traverse the membrane as a helical segment; the sequence is VSFDISIVSLISLIWSLAILL. At 403–414 the chain is on the cytoplasmic side; the sequence is LSKKYKQLPHML. A helical membrane pass occupies residues 415–435; it reads TTNLLIAQSIVCAGMMIWNFV. The Lumenal portion of the chain corresponds to 436-438; sequence KEK. Residues 439–459 form a helical membrane-spanning segment; that stretch reads NFVGQILVFVLLYSSLYSTYL. Residues 460 to 480 are Cytoplasmic-facing; that stretch reads WTGLLAISLFLLKKRERVQIP. Residues 481 to 501 traverse the membrane as a helical segment; sequence VGIIIISGWGIPALLVGVLLI. The Lumenal segment spans residues 502 to 520; it reads TGKHNGDSIDSAFFYGKEQ. A helical membrane pass occupies residues 521–541; it reads MITTAVTLFCSILIAGISLMC. Over 542-660 the chain is Cytoplasmic; sequence MNQTAQAGSY…GDQQLTRHVL (119 aa). Residue Arg-657 participates in cholesterol binding. The chain crosses the membrane as a helical span at residues 661–681; sequence LCLLLIIGLFANLSSCLWWLF. Residues 682 to 691 are Lumenal-facing; sequence NQEPGRLYVE. Residues 692 to 712 traverse the membrane as a helical segment; that stretch reads LQFFCAVFNFGQGFISFGIFG. Topologically, residues 713-870 are cytoplasmic; that stretch reads LDKHLIILPF…SSPPSHSPKT (158 aa). One can recognise a DEP domain in the interval 757–835; sequence YHRDLCIRNI…DEYLFYRFLQ (79 aa).

In terms of assembly, homodimer; via the transporter region and DEP domain. Interacts with the GATOR1 complex and prevents interaction between GATOR1 and KICSTOR; this interaction is disrupted upon cholesterol starvation.

Its subcellular location is the lysosome membrane. Functionally, cholesterol-binding protein that acts as a regulator of mTORC1 signaling pathway. Acts as a sensor of cholesterol to signal cholesterol sufficiency to mTORC1: in presence of cholesterol, binds cholesterol, leading to disruption of the interaction between the GATOR1 and KICSTOR complexes and promotion of mTORC1 signaling. Upon cholesterol starvation, GPR155/LYCHOS is unable to perturb the association between GATOR1 and KICSTOR, leading to mTORC1 signaling inhibition. Binds indole-3-acetic acid and may play a role in tryptophan metabolism. In Homo sapiens (Human), this protein is Lysosomal cholesterol signaling protein.